We begin with the raw amino-acid sequence, 313 residues long: uncharacterized protein (313 aa).

The next 3 helical transmembrane spans lie at 41–61 (LAGT…GLMV), 68–88 (VHSV…FHYF), and 102–122 (QLLL…KLVL).

The protein belongs to the cytochrome b family.

The protein resides in the mitochondrion membrane. This is an uncharacterized protein from Arabidopsis thaliana (Mouse-ear cress).